A 53-amino-acid polypeptide reads, in one-letter code: UPF0391 membrane protein Patl_1732 (53 aa).

The next 2 membrane-spanning stretches (helical) occupy residues 4–24 and 28–48; these read WAVI…GGIA and AGIA…SVVM.

This sequence belongs to the UPF0391 family.

Its subcellular location is the cell membrane. This is UPF0391 membrane protein Patl_1732 from Pseudoalteromonas atlantica (strain T6c / ATCC BAA-1087).